The sequence spans 218 residues: Cytidylate kinase (218 aa).

10-18 (GPAAAGKST) lines the ATP pocket.

It belongs to the cytidylate kinase family. Type 1 subfamily.

It localises to the cytoplasm. It catalyses the reaction CMP + ATP = CDP + ADP. It carries out the reaction dCMP + ATP = dCDP + ADP. In Staphylococcus haemolyticus (strain JCSC1435), this protein is Cytidylate kinase.